A 428-amino-acid chain; its full sequence is Glutamate-1-semialdehyde 2,1-aminomutase 2 (428 aa).

The residue at position 267 (K267) is an N6-(pyridoxal phosphate)lysine.

This sequence belongs to the class-III pyridoxal-phosphate-dependent aminotransferase family. HemL subfamily. As to quaternary structure, homodimer. The cofactor is pyridoxal 5'-phosphate.

The protein resides in the cytoplasm. The catalysed reaction is (S)-4-amino-5-oxopentanoate = 5-aminolevulinate. It functions in the pathway porphyrin-containing compound metabolism; protoporphyrin-IX biosynthesis; 5-aminolevulinate from L-glutamyl-tRNA(Glu): step 2/2. The polypeptide is Glutamate-1-semialdehyde 2,1-aminomutase 2 (Oceanobacillus iheyensis (strain DSM 14371 / CIP 107618 / JCM 11309 / KCTC 3954 / HTE831)).